The sequence spans 637 residues: Chaperone protein DnaK (637 aa).

Threonine 196 carries the phosphothreonine; by autocatalysis modification. Disordered regions lie at residues alanine 503 to glutamate 525 and serine 598 to lysine 637. Positions serine 598–serine 619 are enriched in low complexity.

Belongs to the heat shock protein 70 family.

Acts as a chaperone. This is Chaperone protein DnaK from Chlorobium chlorochromatii (strain CaD3).